The primary structure comprises 259 residues: Phosphate import ATP-binding protein PstB (259 aa).

The region spanning glycine 2–glutamate 248 is the ABC transporter domain. Glycine 37 to serine 44 is a binding site for ATP.

It belongs to the ABC transporter superfamily. Phosphate importer (TC 3.A.1.7) family. In terms of assembly, the complex is composed of two ATP-binding proteins (PstB), two transmembrane proteins (PstC and PstA) and a solute-binding protein (PstS).

Its subcellular location is the cell membrane. The enzyme catalyses phosphate(out) + ATP + H2O = ADP + 2 phosphate(in) + H(+). Part of the ABC transporter complex PstSACB involved in phosphate import. Responsible for energy coupling to the transport system. In Bifidobacterium longum (strain NCC 2705), this protein is Phosphate import ATP-binding protein PstB.